The primary structure comprises 136 residues: Small ribosomal subunit protein bS6 (136 aa).

Residues 99-136 (QSEMLKAEENRSERRERRERPEHGGHEGLDGDSDKADE) are disordered. The segment covering 103–136 (LKAEENRSERRERRERPEHGGHEGLDGDSDKADE) has biased composition (basic and acidic residues).

It belongs to the bacterial ribosomal protein bS6 family.

Its function is as follows. Binds together with bS18 to 16S ribosomal RNA. This Azotobacter vinelandii (strain DJ / ATCC BAA-1303) protein is Small ribosomal subunit protein bS6.